The following is a 296-amino-acid chain: Pseudouridine-5'-phosphate glycosidase (296 aa).

Glutamate 21 (proton donor) is an active-site residue. Substrate contacts are provided by lysine 81 and valine 101. Residue aspartate 130 coordinates Mn(2+). Residue 132–134 (SQD) coordinates substrate. Lysine 151 functions as the Nucleophile in the catalytic mechanism.

Belongs to the pseudouridine-5'-phosphate glycosidase family. In terms of assembly, homotrimer. Mn(2+) serves as cofactor.

The catalysed reaction is D-ribose 5-phosphate + uracil = psi-UMP + H2O. Its function is as follows. Catalyzes the reversible cleavage of pseudouridine 5'-phosphate (PsiMP) to ribose 5-phosphate and uracil. Functions biologically in the cleavage direction, as part of a pseudouridine degradation pathway. The protein is Pseudouridine-5'-phosphate glycosidase of Fervidobacterium nodosum (strain ATCC 35602 / DSM 5306 / Rt17-B1).